A 159-amino-acid polypeptide reads, in one-letter code: Small ribosomal subunit protein uS4 (159 aa).

An S4 RNA-binding domain is found at 106–158; sequence RRLQTIVYRKGLAKSIYHARQLVVHGHVAVAGRRVTSPGFLVPRDLEDKITLI.

The protein belongs to the universal ribosomal protein uS4 family. Part of the 30S ribosomal subunit. Contacts protein S5. The interaction surface between S4 and S5 is involved in control of translational fidelity.

One of the primary rRNA binding proteins, it binds directly to 16S rRNA where it nucleates assembly of the body of the 30S subunit. Its function is as follows. With S5 and S12 plays an important role in translational accuracy. This is Small ribosomal subunit protein uS4 from Pyrobaculum islandicum (strain DSM 4184 / JCM 9189 / GEO3).